Reading from the N-terminus, the 901-residue chain is HTH-type transcriptional regulator MalT (901 aa).

An ATP-binding site is contributed by 39–46 (SPAGYGKT). The HTH luxR-type domain occupies 829–894 (ELIRTSPLTQ…AAVQHAQKLL (66 aa)). Residues 853-872 (NEQIAGELEVAATTIKTHIR) constitute a DNA-binding region (H-T-H motif).

The protein belongs to the MalT family. In terms of assembly, monomer in solution. Oligomerizes to an active state in the presence of the positive effectors ATP and maltotriose.

With respect to regulation, activated by ATP and maltotriose, which are both required for DNA binding. Functionally, positively regulates the transcription of the maltose regulon whose gene products are responsible for uptake and catabolism of malto-oligosaccharides. Specifically binds to the promoter region of its target genes, recognizing a short DNA motif called the MalT box. This Escherichia coli O45:K1 (strain S88 / ExPEC) protein is HTH-type transcriptional regulator MalT.